The sequence spans 77 residues: Large ribosomal subunit protein bL28 (77 aa).

Belongs to the bacterial ribosomal protein bL28 family.

The chain is Large ribosomal subunit protein bL28 from Cupriavidus necator (strain ATCC 17699 / DSM 428 / KCTC 22496 / NCIMB 10442 / H16 / Stanier 337) (Ralstonia eutropha).